An 856-amino-acid chain; its full sequence is Envelope glycoprotein gp160 (856 aa).

The signal sequence occupies residues 1–31 (MRVKGIRRNCQHLWIWGTMLFGMWMICSAVE). Residues 32–684 (QLWVTVYYGV…ITNWLWYIKI (653 aa)) lie on the Extracellular side of the membrane. A disulfide bond links cysteine 53 and cysteine 73. Residues asparagine 87, asparagine 134, asparagine 140, asparagine 151, asparagine 155, asparagine 183, asparagine 197, asparagine 234, asparagine 241, asparagine 262, asparagine 276, asparagine 289, and asparagine 295 are each glycosylated (N-linked (GlcNAc...) asparagine; by host). Disulfide bonds link cysteine 118-cysteine 205, cysteine 125-cysteine 196, cysteine 130-cysteine 152, cysteine 218-cysteine 247, and cysteine 228-cysteine 239. Residues 130-151 (CIDKNITDWENKTIIGGGEVKN) are V1. The interval 152–196 (CSFNITTSIRDKVHKEYALFYKLDVVPIKSNNDSSTYTRYRLIHC) is V2. Residues 296-329 (CTRPNNNVRRRHIHIGPGRAFYTGEIRGNIRQAH) form a V3 region. A disulfide bond links cysteine 296 and cysteine 330. N-linked (GlcNAc...) asparagine; by host glycosylation is found at asparagine 331, asparagine 338, asparagine 354, and asparagine 360. A CD4-binding loop region spans residues 362–372 (SSGGDPEIVTH). 2 cysteine pairs are disulfide-bonded: cysteine 376–cysteine 444 and cysteine 383–cysteine 417. The tract at residues 383–417 (CDSTQLFNSTWNVTGISTEGNNNTEENGDTITLPC) is V4. N-linked (GlcNAc...) asparagine; by host glycans are attached at residues asparagine 390, asparagine 394, asparagine 404, asparagine 447, and asparagine 459. V5 regions lie at residues 460-470 (SSSREEIFRPG) and 462-470 (SREEIFRPG). Residues 511–532 (AVGAIGAMFLGFLGAAGSTMGA) are fusion peptide. The interval 574-592 (KQLQARVLAVERYLRDQQL) is immunosuppression. Cysteines 598 and 604 form a disulfide. N-linked (GlcNAc...) asparagine; by host glycosylation is found at asparagine 611, asparagine 616, asparagine 625, and asparagine 637. The stretch at 633–667 (REIDNYTSLIYNLIEESQNQQEKNEQELLELDKWA) forms a coiled coil. Residues 662–683 (ELDKWASLWNWFSITNWLWYIK) are MPER; binding to GalCer. The chain crosses the membrane as a helical span at residues 685–705 (FIMIVGGLVGLRIVFSVLSIV). The Cytoplasmic segment spans residues 706 to 856 (NRVRQGYSPL…IRQGLERALL (151 aa)). The short motif at 712 to 715 (YSPL) is the YXXL motif; contains endocytosis signal element. Residues 716 to 742 (SFQTHLPTPRGPDRPEGTEEEGGERDR) form a disordered region. Residues cysteine 764 and cysteine 837 are each lipidated (S-palmitoyl cysteine; by host). A Di-leucine internalization motif motif is present at residues 855–856 (LL).

It belongs to the HIV-1 env protein family. The mature envelope protein (Env) consists of a homotrimer of non-covalently associated gp120-gp41 heterodimers. The resulting complex protrudes from the virus surface as a spike. There seems to be as few as 10 spikes on the average virion. Interacts with host CD4, CCR5 and CXCR4. Gp120 also interacts with the C-type lectins CD209/DC-SIGN and CLEC4M/DC-SIGNR (collectively referred to as DC-SIGN(R)). Gp120 and gp41 interact with GalCer. Gp120 interacts with host ITGA4/ITGB7 complex; on CD4+ T-cells, this interaction results in rapid activation of integrin ITGAL/LFA-1, which facilitates efficient cell-to-cell spreading of HIV-1. Gp120 interacts with cell-associated heparan sulfate; this interaction increases virus infectivity on permissive cells and may be involved in infection of CD4- cells. As to quaternary structure, the mature envelope protein (Env) consists of a homotrimer of non-covalently associated gp120-gp41 heterodimers. The resulting complex protrudes from the virus surface as a spike. There seems to be as few as 10 spikes on the average virion. In terms of processing, highly glycosylated by host. The high number of glycan on the protein is reffered to as 'glycan shield' because it contributes to hide protein sequence from adaptive immune system. Post-translationally, palmitoylation of the transmembrane protein and of Env polyprotein (prior to its proteolytic cleavage) is essential for their association with host cell membrane lipid rafts. Palmitoylation is therefore required for envelope trafficking to classical lipid rafts, but not for viral replication. Specific enzymatic cleavages in vivo yield mature proteins. Envelope glycoproteins are synthesized as an inactive precursor that is heavily N-glycosylated and processed likely by host cell furin in the Golgi to yield the mature SU and TM proteins. The cleavage site between SU and TM requires the minimal sequence [KR]-X-[KR]-R. About 2 of the 9 disulfide bonds of gp41 are reduced by P4HB/PDI, following binding to CD4 receptor.

The protein resides in the virion membrane. The protein localises to the host cell membrane. It is found in the host endosome membrane. Functionally, oligomerizes in the host endoplasmic reticulum into predominantly trimers. In a second time, gp160 transits in the host Golgi, where glycosylation is completed. The precursor is then proteolytically cleaved in the trans-Golgi and thereby activated by cellular furin or furin-like proteases to produce gp120 and gp41. Attaches the virus to the host lymphoid cell by binding to the primary receptor CD4. This interaction induces a structural rearrangement creating a high affinity binding site for a chemokine coreceptor like CXCR4 and/or CCR5. Acts as a ligand for CD209/DC-SIGN and CLEC4M/DC-SIGNR, which are respectively found on dendritic cells (DCs), and on endothelial cells of liver sinusoids and lymph node sinuses. These interactions allow capture of viral particles at mucosal surfaces by these cells and subsequent transmission to permissive cells. HIV subverts the migration properties of dendritic cells to gain access to CD4+ T-cells in lymph nodes. Virus transmission to permissive T-cells occurs either in trans (without DCs infection, through viral capture and transmission), or in cis (following DCs productive infection, through the usual CD4-gp120 interaction), thereby inducing a robust infection. In trans infection, bound virions remain infectious over days and it is proposed that they are not degraded, but protected in non-lysosomal acidic organelles within the DCs close to the cell membrane thus contributing to the viral infectious potential during DCs' migration from the periphery to the lymphoid tissues. On arrival at lymphoid tissues, intact virions recycle back to DCs' cell surface allowing virus transmission to CD4+ T-cells. Its function is as follows. Acts as a class I viral fusion protein. Under the current model, the protein has at least 3 conformational states: pre-fusion native state, pre-hairpin intermediate state, and post-fusion hairpin state. During fusion of viral and target intracellular membranes, the coiled coil regions (heptad repeats) assume a trimer-of-hairpins structure, positioning the fusion peptide in close proximity to the C-terminal region of the ectodomain. The formation of this structure appears to drive apposition and subsequent fusion of viral and target cell membranes. Complete fusion occurs in host cell endosomes and is dynamin-dependent, however some lipid transfer might occur at the plasma membrane. The virus undergoes clathrin-dependent internalization long before endosomal fusion, thus minimizing the surface exposure of conserved viral epitopes during fusion and reducing the efficacy of inhibitors targeting these epitopes. Membranes fusion leads to delivery of the nucleocapsid into the cytoplasm. The polypeptide is Envelope glycoprotein gp160 (Homo sapiens (Human)).